The chain runs to 510 residues: NAD(P)H-quinone oxidoreductase subunit 2 B, chloroplastic (510 aa).

The next 12 membrane-spanning stretches (helical) occupy residues 24–44 (LLLF…GLIL), 57–77 (IPWL…ALLF), 99–119 (IFQF…VEYI), 124–144 (MAIT…MFLC), 183–203 (YLLM…WLYG), 227–247 (PGIS…LSPA), 295–315 (WHLL…LIAI), 323–343 (MLAY…IVGD), 347–367 (GYAS…GTFA), 395–415 (ALSS…AGFF), 418–438 (LHLF…IGLL), and 484–504 (MIVC…IIAI).

The protein belongs to the complex I subunit 2 family. In terms of assembly, NDH is composed of at least 16 different subunits, 5 of which are encoded in the nucleus.

Its subcellular location is the plastid. It is found in the chloroplast thylakoid membrane. It catalyses the reaction a plastoquinone + NADH + (n+1) H(+)(in) = a plastoquinol + NAD(+) + n H(+)(out). The enzyme catalyses a plastoquinone + NADPH + (n+1) H(+)(in) = a plastoquinol + NADP(+) + n H(+)(out). In terms of biological role, NDH shuttles electrons from NAD(P)H:plastoquinone, via FMN and iron-sulfur (Fe-S) centers, to quinones in the photosynthetic chain and possibly in a chloroplast respiratory chain. The immediate electron acceptor for the enzyme in this species is believed to be plastoquinone. Couples the redox reaction to proton translocation, and thus conserves the redox energy in a proton gradient. The chain is NAD(P)H-quinone oxidoreductase subunit 2 B, chloroplastic from Calycanthus floridus var. glaucus (Eastern sweetshrub).